The sequence spans 102 residues: Thioredoxin (102 aa).

Residues 2–102 (VTEIKSLKQL…KAKIVQLVSQ (101 aa)) form the Thioredoxin domain. C30 and C33 are disulfide-bonded.

Belongs to the thioredoxin family.

Its function is as follows. Participates in various redox reactions through the reversible oxidation of its active center dithiol to a disulfide and catalyzes dithiol-disulfide exchange reactions. The sequence is that of Thioredoxin (trxA) from Mycoplasma pneumoniae (strain ATCC 29342 / M129 / Subtype 1) (Mycoplasmoides pneumoniae).